The following is a 453-amino-acid chain: Chromosomal replication initiator protein DnaA (453 aa).

A domain I, interacts with DnaA modulators region spans residues 1–71; the sequence is MSEKEIWEKV…QAILFDVVGY (71 aa). A domain II region spans residues 71–114; that stretch reads YEVKPHFITTEELANYSNNETATPKETTKPSTETTEDNHVLGRE. Residues 115-331 form a domain III, AAA+ region region; it reads QFNAHNTFDT…GALTRLLAYS (217 aa). Positions 159, 161, 162, and 163 each coordinate ATP. Residues 332–453 form a domain IV, binds dsDNA region; that stretch reads QLLGKPITTE…ENLEKEIRNV (122 aa).

Belongs to the DnaA family. As to quaternary structure, oligomerizes as a right-handed, spiral filament on DNA at oriC.

Its subcellular location is the cytoplasm. Its function is as follows. Plays an essential role in the initiation and regulation of chromosomal replication. ATP-DnaA binds to the origin of replication (oriC) to initiate formation of the DNA replication initiation complex once per cell cycle. Binds the DnaA box (a 9 base pair repeat at the origin) and separates the double-stranded (ds)DNA. Forms a right-handed helical filament on oriC DNA; dsDNA binds to the exterior of the filament while single-stranded (ss)DNA is stabiized in the filament's interior. The ATP-DnaA-oriC complex binds and stabilizes one strand of the AT-rich DNA unwinding element (DUE), permitting loading of DNA polymerase. After initiation quickly degrades to an ADP-DnaA complex that is not apt for DNA replication. Binds acidic phospholipids. The polypeptide is Chromosomal replication initiator protein DnaA (Staphylococcus aureus (strain Mu3 / ATCC 700698)).